The sequence spans 349 residues: Alanine racemase (349 aa).

K35 functions as the Proton acceptor; specific for D-alanine in the catalytic mechanism. K35 bears the N6-(pyridoxal phosphate)lysine mark. R130 lines the substrate pocket. The active-site Proton acceptor; specific for L-alanine is the Y244. M292 is a substrate binding site.

Belongs to the alanine racemase family. It depends on pyridoxal 5'-phosphate as a cofactor.

The enzyme catalyses L-alanine = D-alanine. The protein operates within amino-acid biosynthesis; D-alanine biosynthesis; D-alanine from L-alanine: step 1/1. Its function is as follows. Catalyzes the interconversion of L-alanine and D-alanine. May also act on other amino acids. The chain is Alanine racemase (alr) from Cereibacter sphaeroides (strain ATCC 17025 / ATH 2.4.3) (Rhodobacter sphaeroides).